The chain runs to 324 residues: tRNA dimethylallyltransferase (324 aa).

Residue 17–24 (GPTASGKT) coordinates ATP. Residue 19–24 (TASGKT) participates in substrate binding. 4 interaction with substrate tRNA regions span residues 42–45 (DSAL), 166–170 (QRIQR), 251–256 (RCVGYR), and 284–291 (KRQITWLR).

The protein belongs to the IPP transferase family. In terms of assembly, monomer. Mg(2+) is required as a cofactor.

The catalysed reaction is adenosine(37) in tRNA + dimethylallyl diphosphate = N(6)-dimethylallyladenosine(37) in tRNA + diphosphate. Functionally, catalyzes the transfer of a dimethylallyl group onto the adenine at position 37 in tRNAs that read codons beginning with uridine, leading to the formation of N6-(dimethylallyl)adenosine (i(6)A). This is tRNA dimethylallyltransferase from Burkholderia ambifaria (strain MC40-6).